A 282-amino-acid chain; its full sequence is Putative phosphoesterase 244L (282 aa).

3 residues coordinate a divalent metal cation: Asp45, Asn80, and His203.

This sequence belongs to the metallophosphoesterase superfamily. IIV-6 244L family.

The protein is Putative phosphoesterase 244L of Invertebrate iridescent virus 6 (IIV-6).